The chain runs to 444 residues: Cop9 signalosome complex subunit 11 (444 aa).

A PCI domain is found at 195–367 (FFTMMTSEPL…IHFEDSSILQ (173 aa)). Residues 419 to 439 (SSDDMDIDEVNDRSDISDSEG) are disordered.

In terms of assembly, component of a COP9 signalosome-like (CSN) complex, composed of RRI1/CSN5, CSN9, RRI2/CSN10, PCI8/CSN11, CSN12 and CSI1. Interacts with PRT1 and RPG1, 2 subunits of the core complex of translation initiation factor 3 (eIF3).

It is found in the cytoplasm. It localises to the nucleus. Functionally, component of the COP9 signalosome (CSN) complex that acts as an regulator of the ubiquitin (Ubl) conjugation pathway by mediating the deneddylation of the cullin subunit of SCF-type E3 ubiquitin-protein ligase complexes The CSN complex is involved in the regulation of the mating pheromone response. PCI8 may also be involved in transcriptional and translational control. This is Cop9 signalosome complex subunit 11 (PCI8) from Saccharomyces cerevisiae (strain ATCC 204508 / S288c) (Baker's yeast).